Here is a 105-residue protein sequence, read N- to C-terminus: UPF0235 protein CT1832 (105 aa).

The protein belongs to the UPF0235 family.

The chain is UPF0235 protein CT1832 from Chlorobaculum tepidum (strain ATCC 49652 / DSM 12025 / NBRC 103806 / TLS) (Chlorobium tepidum).